The primary structure comprises 242 residues: Octanoyltransferase (242 aa).

The region spanning 31 to 206 is the BPL/LPL catalytic domain; the sequence is SQTTDEIWFL…LFLKNFGYNQ (176 aa). Substrate contacts are provided by residues 70–77, 137–139, and 150–152; these read RGGQVTYH, SIG, and GLA. The active-site Acyl-thioester intermediate is Cys-168.

Belongs to the LipB family.

It localises to the cytoplasm. It catalyses the reaction octanoyl-[ACP] + L-lysyl-[protein] = N(6)-octanoyl-L-lysyl-[protein] + holo-[ACP] + H(+). It functions in the pathway protein modification; protein lipoylation via endogenous pathway; protein N(6)-(lipoyl)lysine from octanoyl-[acyl-carrier-protein]: step 1/2. Its function is as follows. Catalyzes the transfer of endogenously produced octanoic acid from octanoyl-acyl-carrier-protein onto the lipoyl domains of lipoate-dependent enzymes. Lipoyl-ACP can also act as a substrate although octanoyl-ACP is likely to be the physiological substrate. The chain is Octanoyltransferase from Coxiella burnetii (strain CbuG_Q212) (Coxiella burnetii (strain Q212)).